We begin with the raw amino-acid sequence, 1079 residues long: Spermatogenesis-associated protein 31G1 (1079 aa).

Disordered regions lie at residues 97-145 (EVEE…GSEG), 261-281 (EDLE…SPSV), 297-317 (GVLS…LEVL), 331-362 (KMPQ…EGGL), 376-412 (EKPQ…RYKP), 506-566 (NLWA…SPPP), 637-678 (VPVF…EQRK), and 840-975 (PHSS…NHPA). The span at 98 to 113 (VEEEGEEEEEGEDEAS) shows a compositional bias: acidic residues. The span at 336–345 (FEPPMPPPCQ) shows a compositional bias: pro residues. Basic and acidic residues predominate over residues 398 to 412 (LQRESSLEDPSRYKP). Composition is skewed to low complexity over residues 551–562 (NSSASRSPSLAL) and 645–655 (SSPSSNSVSKS). Residues 669–678 (PDGEAVEQRK) show a composition bias toward basic and acidic residues. The span at 942 to 951 (AKKREHPRKP) shows a compositional bias: basic residues.

Its function is as follows. Dispensable for normal development and fertility. This is Spermatogenesis-associated protein 31G1 from Homo sapiens (Human).